We begin with the raw amino-acid sequence, 468 residues long: UDP-N-acetylmuramate--L-alanine ligase (468 aa).

ATP is bound at residue 114–120 (GTHGKTT).

Belongs to the MurCDEF family.

The protein resides in the cytoplasm. The enzyme catalyses UDP-N-acetyl-alpha-D-muramate + L-alanine + ATP = UDP-N-acetyl-alpha-D-muramoyl-L-alanine + ADP + phosphate + H(+). It functions in the pathway cell wall biogenesis; peptidoglycan biosynthesis. Functionally, cell wall formation. The protein is UDP-N-acetylmuramate--L-alanine ligase of Methylobacterium radiotolerans (strain ATCC 27329 / DSM 1819 / JCM 2831 / NBRC 15690 / NCIMB 10815 / 0-1).